The chain runs to 523 residues: 2-isopropylmalate synthase (523 aa).

A Pyruvate carboxyltransferase domain is found at 5–267 (VIIFDTTLRD…HTAINHQEIW (263 aa)). Mn(2+) contacts are provided by aspartate 14, histidine 202, histidine 204, and asparagine 238. The tract at residues 392 to 523 (RLDYFSVQSG…QHNENNKETV (132 aa)) is regulatory domain.

This sequence belongs to the alpha-IPM synthase/homocitrate synthase family. LeuA type 1 subfamily. Homodimer. It depends on Mn(2+) as a cofactor.

It is found in the cytoplasm. The enzyme catalyses 3-methyl-2-oxobutanoate + acetyl-CoA + H2O = (2S)-2-isopropylmalate + CoA + H(+). The protein operates within amino-acid biosynthesis; L-leucine biosynthesis; L-leucine from 3-methyl-2-oxobutanoate: step 1/4. Catalyzes the condensation of the acetyl group of acetyl-CoA with 3-methyl-2-oxobutanoate (2-ketoisovalerate) to form 3-carboxy-3-hydroxy-4-methylpentanoate (2-isopropylmalate). The sequence is that of 2-isopropylmalate synthase from Shigella flexneri.